The sequence spans 364 residues: Succinyl-diaminopimelate desuccinylase (364 aa).

A Zn(2+)-binding site is contributed by histidine 64. Aspartate 66 is an active-site residue. Aspartate 95 contributes to the Zn(2+) binding site. Glutamate 125 (proton acceptor) is an active-site residue. Glutamate 126, glutamate 154, and histidine 339 together coordinate Zn(2+).

This sequence belongs to the peptidase M20A family. DapE subfamily. In terms of assembly, homodimer. Zn(2+) is required as a cofactor. The cofactor is Co(2+).

The enzyme catalyses N-succinyl-(2S,6S)-2,6-diaminopimelate + H2O = (2S,6S)-2,6-diaminopimelate + succinate. It functions in the pathway amino-acid biosynthesis; L-lysine biosynthesis via DAP pathway; LL-2,6-diaminopimelate from (S)-tetrahydrodipicolinate (succinylase route): step 3/3. In terms of biological role, catalyzes the hydrolysis of N-succinyl-L,L-diaminopimelic acid (SDAP), forming succinate and LL-2,6-diaminopimelate (DAP), an intermediate involved in the bacterial biosynthesis of lysine and meso-diaminopimelic acid, an essential component of bacterial cell walls. This Nitratiruptor sp. (strain SB155-2) protein is Succinyl-diaminopimelate desuccinylase.